The chain runs to 226 residues: 2-C-methyl-D-erythritol 4-phosphate cytidylyltransferase (226 aa).

The protein belongs to the IspD/TarI cytidylyltransferase family. IspD subfamily.

The enzyme catalyses 2-C-methyl-D-erythritol 4-phosphate + CTP + H(+) = 4-CDP-2-C-methyl-D-erythritol + diphosphate. The protein operates within isoprenoid biosynthesis; isopentenyl diphosphate biosynthesis via DXP pathway; isopentenyl diphosphate from 1-deoxy-D-xylulose 5-phosphate: step 2/6. In terms of biological role, catalyzes the formation of 4-diphosphocytidyl-2-C-methyl-D-erythritol from CTP and 2-C-methyl-D-erythritol 4-phosphate (MEP). In Prochlorococcus marinus (strain SARG / CCMP1375 / SS120), this protein is 2-C-methyl-D-erythritol 4-phosphate cytidylyltransferase.